Reading from the N-terminus, the 300-residue chain is Bifunctional protein FolD (300 aa).

NADP(+) contacts are provided by residues 169-171 (GRG), S196, and I237.

This sequence belongs to the tetrahydrofolate dehydrogenase/cyclohydrolase family. Homodimer.

It carries out the reaction (6R)-5,10-methylene-5,6,7,8-tetrahydrofolate + NADP(+) = (6R)-5,10-methenyltetrahydrofolate + NADPH. The enzyme catalyses (6R)-5,10-methenyltetrahydrofolate + H2O = (6R)-10-formyltetrahydrofolate + H(+). The protein operates within one-carbon metabolism; tetrahydrofolate interconversion. Catalyzes the oxidation of 5,10-methylenetetrahydrofolate to 5,10-methenyltetrahydrofolate and then the hydrolysis of 5,10-methenyltetrahydrofolate to 10-formyltetrahydrofolate. The chain is Bifunctional protein FolD from Clavibacter sepedonicus (Clavibacter michiganensis subsp. sepedonicus).